Here is a 198-residue protein sequence, read N- to C-terminus: Putative mycofactocin biosynthesis transcriptional regulator MftR (198 aa).

Positions 12–72 (STTPHHISDV…GDFSTHLAQL (61 aa)) constitute an HTH tetR-type domain. Residues 35-54 (SVDDIARAAGIARRTLFRYY) constitute a DNA-binding region (H-T-H motif).

Its function is as follows. May regulate a gene cluster involved in mycofactocin expression. Mycofactocin is a conserved polypeptide that might serve as an electron carrier. This chain is Putative mycofactocin biosynthesis transcriptional regulator MftR (mftR), found in Mycobacterium tuberculosis (strain ATCC 25618 / H37Rv).